The sequence spans 225 residues: UPF0173 metal-dependent hydrolase Aflv_0488 (225 aa).

This sequence belongs to the UPF0173 family.

In Anoxybacillus flavithermus (strain DSM 21510 / WK1), this protein is UPF0173 metal-dependent hydrolase Aflv_0488.